A 430-amino-acid chain; its full sequence is MAEITNIRPSFDVSPVAAGLIGASVLVVCVSVTVFVWTCCHQQAEKKHKTPPYKFIHMLKGISIYPETLSNKKKIIKVRRDKDGPRRESGRGNLLINAESGLLSHDKDPRGPSPASCMDQLPIKRDYGEELRSPMTSLTPGESKATSPSSPEEDVMLGSLTFSVDYNFPKKALVVTIQEAHGLPVMDDQTQGSDPYIKMTILPDKRHRVKTRVLRKTLDPVFDETFTFYGIPYSQLQDLVLHFLVLSFDRFSRDDVIGEVMVPLAGVDPSTGKVQLTRDIIKRNIQKCISRGELQVSLSYQPVAQRMTVVVLKARHLPKMDITGLSGNPYVKVNVYYGRKRIAKKKTHVKKCTLNPVFNESFIYDIPTDLLPDISIEFLVIDFDRTTKNEVVGRLILGAHSVTTSGAEHWREVCESPRKPIAKWHSLSEY.

Residues 1 to 15 are Vesicular-facing; sequence MAEITNIRPSFDVSP. Residues 16 to 36 traverse the membrane as a helical segment; sequence VAAGLIGASVLVVCVSVTVFV. Topologically, residues 37 to 430 are cytoplasmic; the sequence is WTCCHQQAEK…IAKWHSLSEY (394 aa). A compositionally biased stretch (basic and acidic residues) spans 79–90; sequence RRDKDGPRRESG. Disordered regions lie at residues 79-120 and 132-152; these read RRDK…CMDQ and RSPMTSLTPGESKATSPSSPE. Phosphoserine is present on S133. The segment covering 134-150 has biased composition (polar residues); it reads PMTSLTPGESKATSPSS. C2 domains lie at 156–278 and 290–425; these read MLGS…QLTR and SRGE…AKWH. Positions 249, 252, and 255 each coordinate Ca(2+).

This sequence belongs to the synaptotagmin family. In terms of assembly, homodimer. Can also form heterodimers. Interacts with PRKN. Interacts (via C2 2 domain) with AGO2 and SND1; the interaction with SND1 is direct. Interacts with KIF1A; the interaction increases in presence of calcium. Ca(2+) is required as a cofactor. In terms of processing, ubiquitinated, at least by PRKN, and targeted to the proteasome complex for degradation. Ubiquitination is inhibited by ATP13A2. In terms of tissue distribution, expressed in cerebellun, cerebellar cortex, hippocampus, olfactory bulb and spinal cord (at protein level). Expressed by neurons, astrocytes and microglia (at protein level). Expressed in macrophages (at protein level).

It localises to the cytoplasmic vesicle membrane. The protein resides in the perikaryon. The protein localises to the golgi apparatus. Its subcellular location is the trans-Golgi network membrane. It is found in the recycling endosome membrane. It localises to the lysosome membrane. The protein resides in the cytoplasmic vesicle. The protein localises to the phagosome. Its subcellular location is the cell projection. It is found in the axon. It localises to the dendrite. The protein resides in the postsynaptic density. The protein localises to the clathrin-coated vesicle membrane. Its function is as follows. Synaptotagmin family member involved in vesicular and membrane trafficking which does not bind Ca(2+). Inhibits clathrin-mediated and bulk endocytosis, functions to ensure precision in vesicle retrieval. Plays an important role in dopamine transmission by regulating endocytosis and the vesicle-recycling process. Essential component of a neuronal vesicular trafficking pathway that differs from the synaptic vesicle trafficking pathway but is crucial for development and synaptic plasticity. In macrophages and microglia, inhibits the conventional cytokine secretion, of at least IL6 and TNF, and phagocytosis. In astrocytes, regulates lysosome exocytosis, mechanism required for the repair of injured astrocyte cell membrane. Required for the ATP13A2-mediated regulation of the autophagy-lysosome pathway. The protein is Synaptotagmin-11 of Mus musculus (Mouse).